The following is a 206-amino-acid chain: HTH-type transcriptional regulator Hpr (206 aa).

The region spanning 13 to 157 is the HTH marR-type domain; that stretch reads ALLFSQRMAQ…MMCIIRNIYG (145 aa). The segment at residues 63 to 86 is a DNA-binding region (H-T-H motif); sequence ISEIAKFGVMHVSTAFNFSKKLEE. The tract at residues 186–206 is disordered; it reads SEELEDSADAAEKAAKANQIV.

As to quaternary structure, homodimer.

Its function is as follows. Negative regulator of protease production and sporulation. This Bacillus pumilus (strain SAFR-032) protein is HTH-type transcriptional regulator Hpr.